A 329-amino-acid polypeptide reads, in one-letter code: GTPase Obg (329 aa).

The Obg domain maps to 1–159; sequence MQFIDYAEIE…RWLRLELKLL (159 aa). Residues 160–328 form the OBG-type G domain; it reads AEVGIIGLPN…LLQIVWQLLD (169 aa). GTP-binding positions include 166-173, 191-195, 213-216, 280-283, and 309-311; these read GLPNAGKS, FTTLV, DIPG, NKMD, and SGV. Serine 173 and threonine 193 together coordinate Mg(2+).

The protein belongs to the TRAFAC class OBG-HflX-like GTPase superfamily. OBG GTPase family. In terms of assembly, monomer. The cofactor is Mg(2+).

It localises to the cytoplasm. An essential GTPase which binds GTP, GDP and possibly (p)ppGpp with moderate affinity, with high nucleotide exchange rates and a fairly low GTP hydrolysis rate. Plays a role in control of the cell cycle, stress response, ribosome biogenesis and in those bacteria that undergo differentiation, in morphogenesis control. This chain is GTPase Obg, found in Rippkaea orientalis (strain PCC 8801 / RF-1) (Cyanothece sp. (strain PCC 8801)).